We begin with the raw amino-acid sequence, 1216 residues long: Coatomer subunit alpha-1 (1216 aa).

8 WD repeats span residues 7–48, 49–88, 91–132, 133–172, 202–241, 246–285, 288–326, and 363–404; these read TKSN…DRFD, EHEG…CLFT, GHLD…SVLT, GHNH…KKTV, GHDR…AWEV, GHMN…GLQT, REHD…PAFA, and SLNQ…VGRS.

As to quaternary structure, oligomeric complex that consists of at least the alpha, beta, beta', gamma, delta, epsilon and zeta subunits.

The protein localises to the cytoplasm. It localises to the golgi apparatus membrane. The protein resides in the cytoplasmic vesicle. Its subcellular location is the COPI-coated vesicle membrane. Its function is as follows. The coatomer is a cytosolic protein complex that binds to dilysine motifs and reversibly associates with Golgi non-clathrin-coated vesicles, which further mediate biosynthetic protein transport from the ER, via the Golgi up to the trans Golgi network. Coatomer complex is required for budding from Golgi membranes, and is essential for the retrograde Golgi-to-ER transport of dilysine-tagged proteins. The sequence is that of Coatomer subunit alpha-1 from Arabidopsis thaliana (Mouse-ear cress).